The chain runs to 606 residues: UPF0329 protein ECU06_0090 (606 aa).

The interval 317–401 (KKEEERREEE…SREACSKERN (85 aa)) is disordered. A compositionally biased stretch (basic and acidic residues) spans 328 to 353 (EKKRKEEVVQRNVEELLRGEEEEKKG). Positions 354–367 (AKAKRKSKKKKKGS) are enriched in basic residues. A compositionally biased stretch (basic and acidic residues) spans 381 to 401 (SENREAQEMEDSREACSKERN).

Belongs to the UPF0329 family.

This Encephalitozoon cuniculi (strain GB-M1) (Microsporidian parasite) protein is UPF0329 protein ECU06_0090.